The chain runs to 349 residues: DNA repair protein XRCC3 (349 aa).

Met-1 carries the N-acetylmethionine modification. Residue 107-114 (GCSSAGKT) coordinates ATP.

The protein belongs to the RecA family. RAD51 subfamily. In terms of assembly, interacts with RAD51C and RAD51. Part of the CX3 complex consisting of RAD51C and XRCC3; the complex has a ring-like structure arranged into a flat disc around a central channel; CX3 can interact with RAD51 in vitro. Forms a complex with FANCD2, BRCA2 and phosphorylated FANCG. Interacts with SWSAP1 and ZSWIM7; involved in homologous recombination repair. Interacts directly with PALB2 which may serve as a scaffold for a HR complex containing PALB2, BRCA2, RAD51C, RAD51 and XRCC3.

It is found in the nucleus. The protein localises to the cytoplasm. It localises to the perinuclear region. Its subcellular location is the mitochondrion matrix. Functionally, involved in the homologous recombination repair (HRR) pathway of double-stranded DNA, thought to repair chromosomal fragmentation, translocations and deletions. Part of the RAD21 paralog protein complex CX3 which acts in the BRCA1-BRCA2-dependent HR pathway. Upon DNA damage, CX3 acts downstream of RAD51 recruitment; the complex binds predominantly to the intersection of the four duplex arms of the Holliday junction (HJ) and to junctions of replication forks. Involved in HJ resolution and thus in processing HR intermediates late in the DNA repair process; the function may be linked to the CX3 complex and seems to involve GEN1 during mitotic cell cycle progression. Part of a PALB2-scaffolded HR complex containing BRCA2 and RAD51C and which is thought to play a role in DNA repair by HR. Plays a role in regulating mitochondrial DNA copy number under conditions of oxidative stress in the presence of RAD51 and RAD51C. The chain is DNA repair protein XRCC3 (Xrcc3) from Mus musculus (Mouse).